The following is a 370-amino-acid chain: Queuine tRNA-ribosyltransferase (370 aa).

Residue Asp89 is the Proton acceptor of the active site. Residues 89–93 (DSGGF), Asp143, Gln185, and Gly212 contribute to the substrate site. Residues 243 to 249 (GVGKPED) are RNA binding. The Nucleophile role is filled by Asp262. The RNA binding; important for wobble base 34 recognition stretch occupies residues 267–271 (TRNAR). Residues Cys300, Cys302, Cys305, and His331 each coordinate Zn(2+).

It belongs to the queuine tRNA-ribosyltransferase family. In terms of assembly, homodimer. Within each dimer, one monomer is responsible for RNA recognition and catalysis, while the other monomer binds to the replacement base PreQ1. Requires Zn(2+) as cofactor.

The enzyme catalyses 7-aminomethyl-7-carbaguanine + guanosine(34) in tRNA = 7-aminomethyl-7-carbaguanosine(34) in tRNA + guanine. The protein operates within tRNA modification; tRNA-queuosine biosynthesis. In terms of biological role, catalyzes the base-exchange of a guanine (G) residue with the queuine precursor 7-aminomethyl-7-deazaguanine (PreQ1) at position 34 (anticodon wobble position) in tRNAs with GU(N) anticodons (tRNA-Asp, -Asn, -His and -Tyr). Catalysis occurs through a double-displacement mechanism. The nucleophile active site attacks the C1' of nucleotide 34 to detach the guanine base from the RNA, forming a covalent enzyme-RNA intermediate. The proton acceptor active site deprotonates the incoming PreQ1, allowing a nucleophilic attack on the C1' of the ribose to form the product. After dissociation, two additional enzymatic reactions on the tRNA convert PreQ1 to queuine (Q), resulting in the hypermodified nucleoside queuosine (7-(((4,5-cis-dihydroxy-2-cyclopenten-1-yl)amino)methyl)-7-deazaguanosine). The sequence is that of Queuine tRNA-ribosyltransferase from Hydrogenovibrio crunogenus (strain DSM 25203 / XCL-2) (Thiomicrospira crunogena).